Consider the following 156-residue polypeptide: Large ribosomal subunit protein uL13 (156 aa).

The protein belongs to the universal ribosomal protein uL13 family. Part of the 50S ribosomal subunit.

This protein is one of the early assembly proteins of the 50S ribosomal subunit, although it is not seen to bind rRNA by itself. It is important during the early stages of 50S assembly. The sequence is that of Large ribosomal subunit protein uL13 from Archaeoglobus fulgidus (strain ATCC 49558 / DSM 4304 / JCM 9628 / NBRC 100126 / VC-16).